The primary structure comprises 1016 residues: Rho family-interacting cell polarization regulator 2 (1016 aa).

2 positions are modified to phosphoserine: Ser-21 and Ser-37. Residues 44-73 are disordered; the sequence is AVKKPQAKLKKMHNLGHKNSSPPKEPQPKR. Residues 48–59 are compositionally biased toward basic residues; that stretch reads PQAKLKKMHNLG. The involved in cell filopodia formation stretch occupies residues 55–113; that stretch reads MHNLGHKNSSPPKEPQPKRVEEVYRALKNGLDEYLEVHQTELDKLTTQLKDMRRNSRLG. A coiled-coil region spans residues 85 to 112; the sequence is LDEYLEVHQTELDKLTTQLKDMRRNSRL. Ser-341 bears the Phosphoserine mark. A compositionally biased stretch (polar residues) spans 414-428; it reads TSTELPPGSQSSQNE. The tract at residues 414-469 is disordered; the sequence is TSTELPPGSQSSQNEGLKDSSSASCSSSSREGSEPRPHPEGETQGLGKPEGCPVAT. Low complexity predominate over residues 433 to 442; sequence SSSASCSSSS. The span at 444 to 454 shows a compositional bias: basic and acidic residues; sequence EGSEPRPHPEG. Phosphoserine occurs at positions 520 and 532. Residues 636–656 form a disordered region; it reads DSVFSDTETEKNSYRSVHPEA. Residues 643–656 are compositionally biased toward basic and acidic residues; it reads ETEKNSYRSVHPEA.

Belongs to the RIPOR family. As to quaternary structure, homooligomer; homooligomerization is regulated by RHOC and leads to the formation of concatemers through the association of N- and C-termini. Interacts (phosphorylated form) with 14-3-3 proteins; these interactions occur during myogenic cell differentiation and also induces T cell proliferation arrest. Interacts (phosphorylated form) with HDAC6; this interaction occurs during early myogenic differentiation, prevents HDAC6 to deacetylate tubulin and also induces T cell proliferation arrest. Interacts with DYSF; this interaction occurs during early myogenic differentiation. Interacts with MYOF. Interacts (via active GTP- or inactive GDP-bound forms) with RHOA; this interaction is direct, blocks the loading of GTP to RHOA and decreases upon chemokine CCL19 stimulation in primary T lymphocytes. Interacts with RHOC. Interacts (via phosphorylated form) with YWHAB; this interaction occurs in a chemokine-dependent manner and does not compete for binding of RIPOR2 with RHOA nor blocks inhibition of RIPOR2-mediated RHOA activity. Interacts with YWHAE. Interacts with YWHAQ. Phosphorylated. Chemokine-induced phosphorylation in neutrophils occurs in a PKC- and AKT-dependent manner, resulting in RIPOR2 interaction with YWHAB and stabilization. Phosphorylated by PKCA, AKT1 and MAPKAPK1A; in vitro.

It is found in the cytoplasm. It localises to the cytoskeleton. Its subcellular location is the cell projection. The protein localises to the filopodium. The protein resides in the apical cell membrane. It is found in the stereocilium. It localises to the stereocilium membrane. In terms of biological role, acts as an inhibitor of the small GTPase RHOA and plays several roles in the regulation of myoblast and hair cell differentiation, lymphocyte T proliferation and neutrophil polarization. Plays a role in fetal mononuclear myoblast differentiation by promoting filopodia and myotube formation. Maintains naive T lymphocytes in a quiescent state and prevents chemokine-induced T lymphocyte responses, such as cell adhesion, polarization and migration. Involved also in the regulation of neutrophil polarization, chemotaxis and adhesion. Required for normal development of inner and outer hair cell stereocilia within the cochlea of the inner ear. Plays a role for maintaining the structural organization of the basal domain of stereocilia. Involved in mechanosensory hair cell function. Required for normal hearing. This chain is Rho family-interacting cell polarization regulator 2, found in Bos taurus (Bovine).